A 198-amino-acid chain; its full sequence is Single-stranded DNA cytosine deaminase (198 aa).

The Bipartite nuclear localization signal signature appears at 1-30 (MDSLLMKQRKFLYHFKNVRWAKGRHETYLC). An interaction with SUPT6H region spans residues 2–26 (DSLLMKQRKFLYHFKNVRWAKGRHE). Residues 23–129 (GRHETYLCYV…KAEPEGLRRL (107 aa)) form the CMP/dCMP-type deaminase domain. Residue threonine 27 is modified to Phosphothreonine; by PKA. Phosphoserine; by PKA is present on serine 38. Positions 39–42 (ATSF) are important for interaction with CTNNBL1. Histidine 56 is a Zn(2+) binding site. The active-site Proton donor is glutamate 58. Zn(2+)-binding residues include cysteine 87 and cysteine 90. Residues 88-116 (YDCARHVADFLRGYPNLSLRIFAARLYFC) form a required for interaction with RNF126 region. Positions 183–198 (LYEVDDLRDAFRTLGL) match the Nuclear export signal motif.

The protein belongs to the cytidine and deoxycytidylate deaminase family. As to quaternary structure, interacts with CTNNBL1; the interaction is important for the immunoglobulin switch activity of AICDA. Interacts (via its NLS) with KPNA1. Interacts with PKA/PRKACA and PRKAR1A/PKR1. Interacts with SUPT6H, TRIM28 and NCL. Directly interacts with MCM3AP; this interaction may favor AICDA recruitment to immunoglobulin variable region genes, hence promoting somatic hypermutations. Zn(2+) serves as cofactor. In terms of processing, ser-38 is the major site whereas Thr-27 is the minor site of phosphorylation. Phosphorylation regulates its class-switch recombination activity. Probably monoubiquitinated on several residues by RNF126. Expressed in thymus, lung, spleen, kidney, small intestine, lymph node and tonsil.

The protein localises to the nucleus. The protein resides in the cytoplasm. The enzyme catalyses a 2'-deoxycytidine in single-stranded DNA + H2O + H(+) = a 2'-deoxyuridine in single-stranded DNA + NH4(+). Functionally, single-stranded DNA-specific cytidine deaminase. Involved in somatic hypermutation (SHM), gene conversion, and class-switch recombination (CSR) in B-lymphocytes by deaminating C to U during transcription of Ig-variable (V) and Ig-switch (S) region DNA. Required for several crucial steps of B-cell terminal differentiation necessary for efficient antibody responses. May also play a role in the epigenetic regulation of gene expression by participating in DNA demethylation. The protein is Single-stranded DNA cytosine deaminase (AICDA) of Canis lupus familiaris (Dog).